A 155-amino-acid polypeptide reads, in one-letter code: MAKGEGKVVAQNKKARHDYTIVDTLEAGMVLTGTEIKSVRAARINLKDGFAQVKNGEVWLSNVHIAPYEEGNIWNQEPERRRKLLLYKKQIQKLEQETKGTGMTLVPLKVYIKDGYAKLLLGLAKGKHDYDKRESIKRREQNRDIARVMKAVNQR.

Belongs to the SmpB family.

The protein localises to the cytoplasm. Required for rescue of stalled ribosomes mediated by trans-translation. Binds to transfer-messenger RNA (tmRNA), required for stable association of tmRNA with ribosomes. tmRNA and SmpB together mimic tRNA shape, replacing the anticodon stem-loop with SmpB. tmRNA is encoded by the ssrA gene; the 2 termini fold to resemble tRNA(Ala) and it encodes a 'tag peptide', a short internal open reading frame. During trans-translation Ala-aminoacylated tmRNA acts like a tRNA, entering the A-site of stalled ribosomes, displacing the stalled mRNA. The ribosome then switches to translate the ORF on the tmRNA; the nascent peptide is terminated with the 'tag peptide' encoded by the tmRNA and targeted for degradation. The ribosome is freed to recommence translation, which seems to be the essential function of trans-translation. The chain is SsrA-binding protein from Streptococcus pneumoniae (strain 70585).